The following is a 423-amino-acid chain: Heat shock transcription factor, X-linked (423 aa).

Residues Met1–Glu25 show a composition bias toward basic and acidic residues. Disordered stretches follow at residues Met1–Ser56, Lys215–Gln303, and Pro397–Thr423. A DNA-binding region spans residues Pro98–Ser282. Lys215 participates in a covalent cross-link: Glycyl lysine isopeptide (Lys-Gly) (interchain with G-Cter in SUMO1). Residues His243–Pro254 are compositionally biased toward polar residues.

It belongs to the HSF family. In terms of tissue distribution, testis-specific.

Its subcellular location is the nucleus. It localises to the cytoplasm. The protein is Heat shock transcription factor, X-linked (HSFX1) of Homo sapiens (Human).